Consider the following 35-residue polypeptide: Thrombin-like enzyme cerastobin (35 aa).

The Peptidase S1 domain occupies 1-35 (VIGGAKCNINEHRSIVLLYSSRLFGHTLINKEWVL).

This sequence belongs to the peptidase S1 family. Snake venom subfamily. Monomer. In terms of tissue distribution, expressed by the venom gland.

The protein resides in the secreted. Its activity is regulated as follows. Inhibited by diisopropylfluorophosphate (DFP). Its function is as follows. Thrombin-like snake venom serine protease, that cleaves both alpha-chain (FGA) and beta-chain (FGB) of fibrinogen. Partially degrades factor X (F10), and release bradykinin from kininogen (KNG). Potently induces platelet aggregation. Shows a proteolytic activity towards protein constituents of the platelets cytoskeleton. Hydrolyzes actin, actin-binding protein, and P235. Shows a preferential cleavage at Arg-|-Xaa bonds. This chain is Thrombin-like enzyme cerastobin, found in Cerastes vipera (Sahara sand viper).